The primary structure comprises 332 residues: Biotin synthase (332 aa).

Positions 53-282 constitute a Radical SAM core domain; that stretch reads HFGKKVKLNM…TKEIRISGGR (230 aa). Positions 71, 75, and 78 each coordinate [4Fe-4S] cluster. [2Fe-2S] cluster is bound by residues Cys-115, Cys-147, Cys-207, and Arg-277.

Belongs to the radical SAM superfamily. Biotin synthase family. Homodimer. The cofactor is [4Fe-4S] cluster. It depends on [2Fe-2S] cluster as a cofactor.

It carries out the reaction (4R,5S)-dethiobiotin + (sulfur carrier)-SH + 2 reduced [2Fe-2S]-[ferredoxin] + 2 S-adenosyl-L-methionine = (sulfur carrier)-H + biotin + 2 5'-deoxyadenosine + 2 L-methionine + 2 oxidized [2Fe-2S]-[ferredoxin]. Its pathway is cofactor biosynthesis; biotin biosynthesis; biotin from 7,8-diaminononanoate: step 2/2. Functionally, catalyzes the conversion of dethiobiotin (DTB) to biotin by the insertion of a sulfur atom into dethiobiotin via a radical-based mechanism. This Bacillus cereus (strain G9842) protein is Biotin synthase.